The primary structure comprises 397 residues: 8-amino-7-oxononanoate synthase (397 aa).

R23 lines the substrate pocket. Residue 110-111 (GY) coordinates pyridoxal 5'-phosphate. Position 135 (H135) interacts with substrate. The pyridoxal 5'-phosphate site is built by S181, H209, and T237. An N6-(pyridoxal phosphate)lysine modification is found at K240. T354 contributes to the substrate binding site.

This sequence belongs to the class-II pyridoxal-phosphate-dependent aminotransferase family. BioF subfamily. Homodimer. Requires pyridoxal 5'-phosphate as cofactor.

The catalysed reaction is 6-carboxyhexanoyl-[ACP] + L-alanine + H(+) = (8S)-8-amino-7-oxononanoate + holo-[ACP] + CO2. It functions in the pathway cofactor biosynthesis; biotin biosynthesis. In terms of biological role, catalyzes the decarboxylative condensation of pimeloyl-[acyl-carrier protein] and L-alanine to produce 8-amino-7-oxononanoate (AON), [acyl-carrier protein], and carbon dioxide. This chain is 8-amino-7-oxononanoate synthase, found in Anaeromyxobacter sp. (strain Fw109-5).